The chain runs to 478 residues: Transposase for insertion sequence element IS231D (478 aa).

It belongs to the transposase 11 family.

Its function is as follows. Involved in the transposition of the insertion sequence. This chain is Transposase for insertion sequence element IS231D, found in Bacillus thuringiensis subsp. finitimus.